We begin with the raw amino-acid sequence, 146 residues long: Hemoglobin subunit beta (146 aa).

Residue V1 is modified to N-acetylvaline. The Globin domain maps to 2–146 (HLTGEEKSAV…VANALAHKYH (145 aa)). Position 12 is a phosphothreonine (T12). At S44 the chain carries Phosphoserine. K59 is modified (N6-acetyllysine). H63 serves as a coordination point for heme b. Residue K82 is modified to N6-acetyllysine. H92 contributes to the heme b binding site. An S-nitrosocysteine modification is found at C93. Residue K144 is modified to N6-acetyllysine.

It belongs to the globin family. In terms of assembly, heterotetramer of two alpha chains and two beta chains. As to expression, red blood cells.

In terms of biological role, involved in oxygen transport from the lung to the various peripheral tissues. The polypeptide is Hemoglobin subunit beta (HBB) (Saguinus mystax (Moustached tamarin)).